We begin with the raw amino-acid sequence, 36 residues long: Photosystem II reaction center protein X (36 aa).

The chain crosses the membrane as a helical span at residues 9 to 29; it reads LWSIFWGGVVVALGAAALTAI.

The protein belongs to the PsbX family. Type 1 subfamily. In terms of assembly, PSII is composed of 1 copy each of membrane proteins PsbA, PsbB, PsbC, PsbD, PsbE, PsbF, PsbH, PsbI, PsbJ, PsbK, PsbL, PsbM, PsbT, PsbX, Psb30/Ycf12, peripheral proteins PsbO, CyanoQ (PsbQ), PsbU, PsbV and a large number of cofactors. It forms dimeric complexes.

It is found in the cell inner membrane. Its function is as follows. Involved in the binding and/or turnover of quinones at the Q(B) site of photosystem II (PSII). PSII is a light-driven water plastoquinone oxidoreductase, using light energy to abstract electrons from H(2)O, generating a proton gradient subsequently used for ATP formation. This Gloeobacter violaceus (strain ATCC 29082 / PCC 7421) protein is Photosystem II reaction center protein X.